A 649-amino-acid polypeptide reads, in one-letter code: 70 kDa protein (649 aa).

Disordered regions lie at residues 28–80, 257–286, 311–359, and 458–550; these read LRRG…DFSP, ALSL…AASD, TATS…SKQQ, and QSAE…PSSL. Residues 268–279 are compositionally biased toward polar residues; sequence KSTSPCNNSQLP. Residues 330 to 349 show a composition bias toward basic residues; sequence RLQRSLHLHSRSPHSSHFRP. The segment covering 504 to 515 has biased composition (polar residues); it reads DVSNSETKNCPS. Composition is skewed to low complexity over residues 524–533 and 540–550; these read PNHLHPLLPG and PRQLSPSPSSL.

This sequence belongs to the tymoviridae protein p69 family.

This chain is 70 kDa protein, found in Solanum lycopersicum (Tomato).